We begin with the raw amino-acid sequence, 283 residues long: Pantothenate synthetase (283 aa).

30-37 (MGNLHDGH) is a binding site for ATP. Histidine 37 (proton donor) is an active-site residue. (R)-pantoate is bound at residue glutamine 61. Residue glutamine 61 participates in beta-alanine binding. 149–152 (GEKD) is an ATP binding site. Glutamine 155 lines the (R)-pantoate pocket. Residues methionine 178 and 186–189 (LSSR) each bind ATP.

Belongs to the pantothenate synthetase family. Homodimer.

Its subcellular location is the cytoplasm. It catalyses the reaction (R)-pantoate + beta-alanine + ATP = (R)-pantothenate + AMP + diphosphate + H(+). Its pathway is cofactor biosynthesis; (R)-pantothenate biosynthesis; (R)-pantothenate from (R)-pantoate and beta-alanine: step 1/1. With respect to regulation, activation requires a combination of a divalent cation, magnesium or manganese, and a monovalent cation, potassium or ammonium. Above the optimum concentration for activation, magnesium and manganese are rather inhibitory. Also activated by 2-mercaptoethanol, dithiothreitol, cysteine and glutathione. Inhibited by divalent cations (mercury, cobalt, zinc, copper, silver), chelating agents (EDTA, EGTA and o-phenanthroline), and analogs of beta-alanine (taurine, gamma-aminobutyrate, gamma-amino-beta-hydroxybutyrate). Functionally, catalyzes the condensation of pantoate with beta-alanine in an ATP-dependent reaction via a pantoyl-adenylate intermediate. The protein is Pantothenate synthetase (panC) of Escherichia coli (strain K12).